The chain runs to 556 residues: Delta-1-pyrroline-5-carboxylate dehydrogenase, mitochondrial (556 aa).

Residues 1–17 constitute a mitochondrion transit peptide; it reads MLRARSAVSQSWKGFKT. Residues Lys-226 and 279–283 contribute to the NAD(+) site; that span reads GSVPT. The active-site Proton acceptor is Glu-307. The Nucleophile role is filled by Cys-341. Glu-440 provides a ligand contact to NAD(+). Ser-506 contributes to the substrate binding site.

This sequence belongs to the aldehyde dehydrogenase family.

It is found in the mitochondrion matrix. It catalyses the reaction L-glutamate 5-semialdehyde + NAD(+) + H2O = L-glutamate + NADH + 2 H(+). The protein operates within amino-acid degradation; L-proline degradation into L-glutamate; L-glutamate from L-proline: step 2/2. Functionally, irreversible conversion of delta-1-pyrroline-5-carboxylate (P5C), derived either from proline or ornithine, to glutamate. This is a necessary step in the pathway interconnecting the urea and tricarboxylic acid cycles. This Danio rerio (Zebrafish) protein is Delta-1-pyrroline-5-carboxylate dehydrogenase, mitochondrial (aldh4a1).